The primary structure comprises 229 residues: Uracil-DNA glycosylase (229 aa).

Aspartate 65 (proton acceptor) is an active-site residue.

The protein belongs to the uracil-DNA glycosylase (UDG) superfamily. UNG family.

It localises to the cytoplasm. It carries out the reaction Hydrolyzes single-stranded DNA or mismatched double-stranded DNA and polynucleotides, releasing free uracil.. Functionally, excises uracil residues from the DNA which can arise as a result of misincorporation of dUMP residues by DNA polymerase or due to deamination of cytosine. This chain is Uracil-DNA glycosylase, found in Brevibacillus brevis (strain 47 / JCM 6285 / NBRC 100599).